Reading from the N-terminus, the 1703-residue chain is Arf-GAP with Rho-GAP domain, ANK repeat and PH domain-containing protein 2 (1703 aa).

Residues 6–70 form the SAM domain; sequence EVNADIRDFL…LKQLQMIFSK (65 aa). Tyr-77 carries the post-translational modification Phosphotyrosine. Disordered stretches follow at residues 84–132, 191–232, and 286–319; these read KNGS…LSEG, EEHT…NGTN, and PVPE…LTLK. 3 stretches are compositionally biased toward polar residues: residues 85–103, 123–132, and 197–214; these read NGST…STHT, MVTTSTLSEG, and GNLT…NTEC. The segment covering 222–232 has biased composition (low complexity); sequence TSGTHSGNGTN. A compositionally biased stretch (polar residues) spans 308–319; sequence NTTSAGKSLTLK. 2 PH domains span residues 480 to 572 and 585 to 677; these read AKEK…SALK and APEK…QSIA. The region spanning 674 to 809 is the Arf-GAP domain; the sequence is QSIAETLSDY…TLLASLTKEE (136 aa). The segment at 698 to 721 adopts a C4-type zinc-finger fold; sequence CADCKAPDPDWASINLCVVICKKC. 2 PH domains span residues 899 to 1001 and 1012 to 1110; these read QTAA…KRFV and DYDL…KAAG. In terms of domain architecture, Rho-GAP spans 1114-1295; the sequence is NALQDQQLCK…DLINNYVEIF (182 aa). Residues 1324–1418 form the Ras-associating domain; that stretch reads GDLLIEVFVE…AYLVVKRFLT (95 aa). The PH 5 domain occupies 1428–1531; sequence KSIKEGILKL…WMASIFIAQH (104 aa). Position 1627 is a phosphoserine (Ser-1627). 2 disordered regions span residues 1633-1670 and 1684-1703; these read DTEA…DPKL and RSRP…KEVK. Basic and acidic residues-rich tracts occupy residues 1653–1670 and 1688–1703; these read KKTE…DPKL and LHKE…KEVK.

The protein localises to the cytoplasm. Phosphatidylinositol 3,4,5-trisphosphate-dependent GTPase-activating protein that modulates actin cytoskeleton remodeling by regulating ARF and RHO family members. Is activated by phosphatidylinositol 3,4,5-trisphosphate (PtdIns(3,4,5)P3) binding. Can be activated by phosphatidylinositol 3,4-bisphosphate (PtdIns(3,4,5)P2) binding, albeit with lower efficiency. The sequence is that of Arf-GAP with Rho-GAP domain, ANK repeat and PH domain-containing protein 2 (Arap2) from Mus musculus (Mouse).